A 298-amino-acid chain; its full sequence is Bifunctional protein FolD (298 aa).

Residues G167 to S169, S192, and V233 each bind NADP(+).

It belongs to the tetrahydrofolate dehydrogenase/cyclohydrolase family. In terms of assembly, homodimer.

It catalyses the reaction (6R)-5,10-methylene-5,6,7,8-tetrahydrofolate + NADP(+) = (6R)-5,10-methenyltetrahydrofolate + NADPH. It carries out the reaction (6R)-5,10-methenyltetrahydrofolate + H2O = (6R)-10-formyltetrahydrofolate + H(+). It functions in the pathway one-carbon metabolism; tetrahydrofolate interconversion. In terms of biological role, catalyzes the oxidation of 5,10-methylenetetrahydrofolate to 5,10-methenyltetrahydrofolate and then the hydrolysis of 5,10-methenyltetrahydrofolate to 10-formyltetrahydrofolate. The chain is Bifunctional protein FolD from Chelativorans sp. (strain BNC1).